A 102-amino-acid polypeptide reads, in one-letter code: uncharacterized protein (102 aa).

Residues T27 to F47 traverse the membrane as a helical segment.

The protein localises to the membrane. This is an uncharacterized protein from Saccharomyces cerevisiae (strain ATCC 204508 / S288c) (Baker's yeast).